The following is a 415-amino-acid chain: Gamma-glutamyl phosphate reductase (415 aa).

The protein belongs to the gamma-glutamyl phosphate reductase family.

It localises to the cytoplasm. It carries out the reaction L-glutamate 5-semialdehyde + phosphate + NADP(+) = L-glutamyl 5-phosphate + NADPH + H(+). It participates in amino-acid biosynthesis; L-proline biosynthesis; L-glutamate 5-semialdehyde from L-glutamate: step 2/2. Catalyzes the NADPH-dependent reduction of L-glutamate 5-phosphate into L-glutamate 5-semialdehyde and phosphate. The product spontaneously undergoes cyclization to form 1-pyrroline-5-carboxylate. This chain is Gamma-glutamyl phosphate reductase, found in Clostridium perfringens (strain ATCC 13124 / DSM 756 / JCM 1290 / NCIMB 6125 / NCTC 8237 / Type A).